Here is a 135-residue protein sequence, read N- to C-terminus: MPTIQQLIRSGRSIKASKTASPALEKCPQKRGVCTRVYTTTPKKPNSALRKVARVRLSNKIEVTAYIPGEGHNLQEHSIVLIRGGRVKDLPGVRYHIVRGSLDTSGVADRKQSRSKYGAKQPKAGAAAPAKGKGR.

A 3-methylthioaspartic acid modification is found at Asp-89. Residues 101 to 135 (SLDTSGVADRKQSRSKYGAKQPKAGAAAPAKGKGR) are disordered. Residues 118 to 135 (GAKQPKAGAAAPAKGKGR) are compositionally biased toward low complexity.

Belongs to the universal ribosomal protein uS12 family. As to quaternary structure, part of the 30S ribosomal subunit. Contacts proteins S8 and S17. May interact with IF1 in the 30S initiation complex.

With S4 and S5 plays an important role in translational accuracy. Its function is as follows. Interacts with and stabilizes bases of the 16S rRNA that are involved in tRNA selection in the A site and with the mRNA backbone. Located at the interface of the 30S and 50S subunits, it traverses the body of the 30S subunit contacting proteins on the other side and probably holding the rRNA structure together. The combined cluster of proteins S8, S12 and S17 appears to hold together the shoulder and platform of the 30S subunit. The sequence is that of Small ribosomal subunit protein uS12 from Chlorobium limicola (strain DSM 245 / NBRC 103803 / 6330).